The primary structure comprises 381 residues: Putative F-box/kelch-repeat protein At1g60570 (381 aa).

An F-box domain is found at 19-65 (PTLIPSLPEELILSILARVSRLSYRSLSLVCKRFHSLLTSGEIYRFR). Kelch repeat units follow at residues 126-169 (KIYK…LIDG), 171-218 (IYVT…ERTN), 220-266 (LLVD…VIEN), and 269-314 (YDFF…DYGG).

The chain is Putative F-box/kelch-repeat protein At1g60570 from Arabidopsis thaliana (Mouse-ear cress).